The chain runs to 136 residues: Protein NrdI (136 aa).

It belongs to the NrdI family.

Probably involved in ribonucleotide reductase function. This is Protein NrdI from Escherichia coli O1:K1 / APEC.